Consider the following 141-residue polypeptide: ATP synthase epsilon chain (141 aa).

It belongs to the ATPase epsilon chain family. In terms of assembly, F-type ATPases have 2 components, CF(1) - the catalytic core - and CF(0) - the membrane proton channel. CF(1) has five subunits: alpha(3), beta(3), gamma(1), delta(1), epsilon(1). CF(0) has three main subunits: a, b and c.

The protein resides in the cell inner membrane. Functionally, produces ATP from ADP in the presence of a proton gradient across the membrane. This is ATP synthase epsilon chain from Pseudomonas fluorescens (strain ATCC BAA-477 / NRRL B-23932 / Pf-5).